We begin with the raw amino-acid sequence, 115 residues long: MRFMLKSKLHMACVTDKNINYEGSIEIDEELMNIVDLKENELVLIADLNNGQRFETYVIKGKPGSGTISLNGAAARLVEKGDRIIVMSFGIFNDGEYSGPKVAILNEKNQVIHLK.

Ser-24 functions as the Schiff-base intermediate with substrate; via pyruvic acid in the catalytic mechanism. Ser-24 is modified (pyruvic acid (Ser)). Thr-56 serves as a coordination point for substrate. The active-site Proton donor is Tyr-57. Position 72 to 74 (72 to 74 (GAA)) interacts with substrate.

It belongs to the PanD family. As to quaternary structure, heterooctamer of four alpha and four beta subunits. Pyruvate serves as cofactor. Post-translationally, is synthesized initially as an inactive proenzyme, which is activated by self-cleavage at a specific serine bond to produce a beta-subunit with a hydroxyl group at its C-terminus and an alpha-subunit with a pyruvoyl group at its N-terminus.

It localises to the cytoplasm. The enzyme catalyses L-aspartate + H(+) = beta-alanine + CO2. Its pathway is cofactor biosynthesis; (R)-pantothenate biosynthesis; beta-alanine from L-aspartate: step 1/1. Catalyzes the pyruvoyl-dependent decarboxylation of aspartate to produce beta-alanine. This Pseudothermotoga lettingae (strain ATCC BAA-301 / DSM 14385 / NBRC 107922 / TMO) (Thermotoga lettingae) protein is Aspartate 1-decarboxylase.